We begin with the raw amino-acid sequence, 1933 residues long: Protein TIC 214 (1933 aa).

Helical transmembrane passes span 18–38 (IVNSVVVVGLYYGLLTTFSIG), 60–80 (ATTGFITGQLIMFISIYYAPL), 87–107 (PHTITVLALPYLFVYFIFYTD), 128–148 (FSIQCVFLNNLIFQLFNHFIL), 176–196 (VGWLIGHILFWKWLGLVLVWI), and 230–250 (IFYILVILIWFYLGGKIPAPL). 4 disordered regions span residues 266-291 (AKGKKKKRGKGEEEGDVEKEDEVGVG), 473-514 (KTKS…SRDN), 808-832 (THREEKKKRKKDEKNEKNAKNAEDP), and 1066-1121 (ESFT…SSNA). Acidic residues predominate over residues 278–289 (EEGDVEKEDEVG). Positions 476-487 (SLSPEKTSGDNL) are enriched in polar residues. Composition is skewed to basic and acidic residues over residues 488–514 (ETSRDNLETSRDNLETSRDNLETSRDN) and 819–832 (DEKNEKNAKNAEDP). Polar residues predominate over residues 1066–1078 (ESFTQISSPSSTN). Residues 1105–1115 (KEKKKKKRSLK) show a composition bias toward basic residues. Residues 1135 to 1155 (LPVYLKLFIQRIYTGIFFSII) form a helical membrane-spanning segment. Positions 1562–1642 (NADNEKNEKK…SAESTTKKVT (81 aa)) are disordered. Basic and acidic residues predominate over residues 1564–1642 (DNEKNEKKEA…SAESTTKKVT (79 aa)).

Belongs to the TIC214 family. As to quaternary structure, part of the Tic complex.

It localises to the plastid. The protein localises to the chloroplast inner membrane. Functionally, involved in protein precursor import into chloroplasts. May be part of an intermediate translocation complex acting as a protein-conducting channel at the inner envelope. This Jasminum nudiflorum (Winter jasmine) protein is Protein TIC 214.